The sequence spans 469 residues: 3-isopropylmalate dehydratase large subunit (469 aa).

Positions 350, 410, and 413 each coordinate [4Fe-4S] cluster.

The protein belongs to the aconitase/IPM isomerase family. LeuC type 1 subfamily. Heterodimer of LeuC and LeuD. It depends on [4Fe-4S] cluster as a cofactor.

It catalyses the reaction (2R,3S)-3-isopropylmalate = (2S)-2-isopropylmalate. It functions in the pathway amino-acid biosynthesis; L-leucine biosynthesis; L-leucine from 3-methyl-2-oxobutanoate: step 2/4. Catalyzes the isomerization between 2-isopropylmalate and 3-isopropylmalate, via the formation of 2-isopropylmaleate. In Rhizobium johnstonii (strain DSM 114642 / LMG 32736 / 3841) (Rhizobium leguminosarum bv. viciae), this protein is 3-isopropylmalate dehydratase large subunit.